The sequence spans 486 residues: ATP synthase subunit beta (486 aa).

Glycine 171 to threonine 178 provides a ligand contact to ATP.

Belongs to the ATPase alpha/beta chains family. In terms of assembly, F-type ATPases have 2 components, CF(1) - the catalytic core - and CF(0) - the membrane proton channel. CF(1) has five subunits: alpha(3), beta(3), gamma(1), delta(1), epsilon(1). CF(0) has three main subunits: a(1), b(2) and c(9-12). The alpha and beta chains form an alternating ring which encloses part of the gamma chain. CF(1) is attached to CF(0) by a central stalk formed by the gamma and epsilon chains, while a peripheral stalk is formed by the delta and b chains.

The protein localises to the cell membrane. It catalyses the reaction ATP + H2O + 4 H(+)(in) = ADP + phosphate + 5 H(+)(out). Its function is as follows. Produces ATP from ADP in the presence of a proton gradient across the membrane. The catalytic sites are hosted primarily by the beta subunits. The chain is ATP synthase subunit beta from Salinispora tropica (strain ATCC BAA-916 / DSM 44818 / JCM 13857 / NBRC 105044 / CNB-440).